Here is a 126-residue protein sequence, read N- to C-terminus: Protein translocase subunit SecE (126 aa).

Transmembrane regions (helical) follow at residues 18–38 (LKWV…YLYG), 40–60 (LSVV…LGVA), and 97–117 (IVLA…GIMV).

Belongs to the SecE/SEC61-gamma family. As to quaternary structure, component of the Sec protein translocase complex. Heterotrimer consisting of SecY, SecE and SecG subunits. The heterotrimers can form oligomers, although 1 heterotrimer is thought to be able to translocate proteins. Interacts with the ribosome. Interacts with SecDF, and other proteins may be involved. Interacts with SecA.

It is found in the cell inner membrane. Functionally, essential subunit of the Sec protein translocation channel SecYEG. Clamps together the 2 halves of SecY. May contact the channel plug during translocation. The sequence is that of Protein translocase subunit SecE from Vibrio cholerae serotype O1 (strain ATCC 39315 / El Tor Inaba N16961).